We begin with the raw amino-acid sequence, 473 residues long: ATP synthase subunit beta (473 aa).

158–165 (GGAGVGKT) provides a ligand contact to ATP.

The protein belongs to the ATPase alpha/beta chains family. As to quaternary structure, F-type ATPases have 2 components, CF(1) - the catalytic core - and CF(0) - the membrane proton channel. CF(1) has five subunits: alpha(3), beta(3), gamma(1), delta(1), epsilon(1). CF(0) has three main subunits: a(1), b(2) and c(9-12). The alpha and beta chains form an alternating ring which encloses part of the gamma chain. CF(1) is attached to CF(0) by a central stalk formed by the gamma and epsilon chains, while a peripheral stalk is formed by the delta and b chains. The F(1)F(0) complex interacts with SpoIIIJ and YqjG; YqgA is found in the same complex.

The protein resides in the cell membrane. It is found in the membrane raft. It catalyses the reaction ATP + H2O + 4 H(+)(in) = ADP + phosphate + 5 H(+)(out). Produces ATP from ADP in the presence of a proton gradient across the membrane. The catalytic sites are hosted primarily by the beta subunits. The protein is ATP synthase subunit beta of Bacillus subtilis (strain 168).